The sequence spans 264 residues: S-adenosylmethionine decarboxylase proenzyme (264 aa).

S113 functions as the Schiff-base intermediate with substrate; via pyruvic acid in the catalytic mechanism. Position 113 is a pyruvic acid (Ser); by autocatalysis (S113). H118 functions as the Proton acceptor; for processing activity in the catalytic mechanism. Residue C141 is the Proton donor; for catalytic activity of the active site.

This sequence belongs to the prokaryotic AdoMetDC family. Type 2 subfamily. Heterooctamer of four alpha and four beta chains arranged as a tetramer of alpha/beta heterodimers. It depends on pyruvate as a cofactor. In terms of processing, is synthesized initially as an inactive proenzyme. Formation of the active enzyme involves a self-maturation process in which the active site pyruvoyl group is generated from an internal serine residue via an autocatalytic post-translational modification. Two non-identical subunits are generated from the proenzyme in this reaction, and the pyruvate is formed at the N-terminus of the alpha chain, which is derived from the carboxyl end of the proenzyme. The post-translation cleavage follows an unusual pathway, termed non-hydrolytic serinolysis, in which the side chain hydroxyl group of the serine supplies its oxygen atom to form the C-terminus of the beta chain, while the remainder of the serine residue undergoes an oxidative deamination to produce ammonia and the pyruvoyl group blocking the N-terminus of the alpha chain.

It catalyses the reaction S-adenosyl-L-methionine + H(+) = S-adenosyl 3-(methylsulfanyl)propylamine + CO2. It functions in the pathway amine and polyamine biosynthesis; S-adenosylmethioninamine biosynthesis; S-adenosylmethioninamine from S-adenosyl-L-methionine: step 1/1. Its function is as follows. Catalyzes the decarboxylation of S-adenosylmethionine to S-adenosylmethioninamine (dcAdoMet), the propylamine donor required for the synthesis of the polyamines spermine and spermidine from the diamine putrescine. This chain is S-adenosylmethionine decarboxylase proenzyme, found in Pseudomonas syringae pv. tomato (strain ATCC BAA-871 / DC3000).